The chain runs to 571 residues: Medium/long-chain-fatty-acid--CoA ligase FadD8 (571 aa).

The tract at residues 1-22 (MSTAGDDAVGVPPACGGRSDAV) is disordered.

It belongs to the ATP-dependent AMP-binding enzyme family.

The enzyme catalyses a medium-chain fatty acid + ATP + CoA = a medium-chain fatty acyl-CoA + AMP + diphosphate. It carries out the reaction a long-chain fatty acid + ATP + CoA = a long-chain fatty acyl-CoA + AMP + diphosphate. The catalysed reaction is hexanoate + ATP + CoA = hexanoyl-CoA + AMP + diphosphate. It catalyses the reaction dodecanoate + ATP + CoA = dodecanoyl-CoA + AMP + diphosphate. The enzyme catalyses hexadecanoate + ATP + CoA = hexadecanoyl-CoA + AMP + diphosphate. It participates in lipid metabolism; fatty acid metabolism. In terms of biological role, catalyzes the activation of medium/long-chain fatty acids as acyl-coenzyme A (acyl-CoA). This Mycobacterium tuberculosis (strain ATCC 25618 / H37Rv) protein is Medium/long-chain-fatty-acid--CoA ligase FadD8.